We begin with the raw amino-acid sequence, 244 residues long: Carbonic anhydrase (244 aa).

Residues 1-19 (MKGKFSIALMLSACFSASA) form the signal peptide. The region spanning 23–244 (VHWGYEGSGD…QPLNGRIIIH (222 aa)) is the Alpha-carbonic anhydrase domain. A disulfide bond links cysteine 46 and cysteine 199. Histidine 84 functions as the Proton acceptor in the catalytic mechanism. Residues histidine 109, histidine 111, and histidine 128 each coordinate Zn(2+). A substrate-binding site is contributed by 195–196 (TT).

Belongs to the alpha-carbonic anhydrase family. It depends on Zn(2+) as a cofactor.

It is found in the periplasm. The catalysed reaction is hydrogencarbonate + H(+) = CO2 + H2O. Functionally, reversible hydration of carbon dioxide. This chain is Carbonic anhydrase (cah), found in Pectobacterium atrosepticum (strain SCRI 1043 / ATCC BAA-672) (Erwinia carotovora subsp. atroseptica).